The sequence spans 303 residues: Protoheme IX farnesyltransferase (303 aa).

9 consecutive transmembrane segments (helical) span residues 25–45 (MGLV…AVVM), 54–74 (IPQI…ACAL), 104–124 (LLLL…LLNI), 125–145 (PSGV…SIWS), 151–171 (WNTV…WVAI), 179–199 (AIAL…ALAI), 227–247 (FIWL…GVVF), 248–268 (VVLA…TFKK), and 280–300 (FIYS…VSLL).

This sequence belongs to the UbiA prenyltransferase family. Protoheme IX farnesyltransferase subfamily. In terms of assembly, interacts with CtaA.

It localises to the cell membrane. The enzyme catalyses heme b + (2E,6E)-farnesyl diphosphate + H2O = Fe(II)-heme o + diphosphate. It functions in the pathway porphyrin-containing compound metabolism; heme O biosynthesis; heme O from protoheme: step 1/1. Functionally, converts heme B (protoheme IX) to heme O by substitution of the vinyl group on carbon 2 of heme B porphyrin ring with a hydroxyethyl farnesyl side group. The chain is Protoheme IX farnesyltransferase from Staphylococcus aureus (strain bovine RF122 / ET3-1).